A 691-amino-acid polypeptide reads, in one-letter code: Elongation factor G (691 aa).

Residues 8–282 (ERVRNIGIAA…AVVDYLPAPV (275 aa)) enclose the tr-type G domain. Residues 17-24 (AHIDAGKT), 81-85 (DTPGH), and 135-138 (NKMD) contribute to the GTP site.

This sequence belongs to the TRAFAC class translation factor GTPase superfamily. Classic translation factor GTPase family. EF-G/EF-2 subfamily.

Its subcellular location is the cytoplasm. Functionally, catalyzes the GTP-dependent ribosomal translocation step during translation elongation. During this step, the ribosome changes from the pre-translocational (PRE) to the post-translocational (POST) state as the newly formed A-site-bound peptidyl-tRNA and P-site-bound deacylated tRNA move to the P and E sites, respectively. Catalyzes the coordinated movement of the two tRNA molecules, the mRNA and conformational changes in the ribosome. The chain is Elongation factor G from Prochlorococcus marinus (strain MIT 9313).